A 495-amino-acid polypeptide reads, in one-letter code: Lysine--tRNA ligase (495 aa).

The Mg(2+) site is built by glutamate 406 and glutamate 413.

The protein belongs to the class-II aminoacyl-tRNA synthetase family. Homodimer. Mg(2+) serves as cofactor.

The protein localises to the cytoplasm. The enzyme catalyses tRNA(Lys) + L-lysine + ATP = L-lysyl-tRNA(Lys) + AMP + diphosphate. The chain is Lysine--tRNA ligase from Staphylococcus aureus (strain MW2).